A 411-amino-acid polypeptide reads, in one-letter code: MALIVQKFGGTSVGSIERIEQVAEKVKKHREAGDDLVVVLSAMSGETNRLIDLAKQITDQPVPRELDVIVSTGEQVTIALLTMALIKRGVPAVSYTGNQVRILTDSSHNKARILQIDDQKIRADLKEGRVVVVAGFQGVDEHGSITTLGRGGSDTTGVALAAALKADECQIYTDVDGVYTTDPRVVPQARRLEKITFEEMLEMASLGSKVLQIRSVEFAGKYNVPLRVLHSFKEGPGTLITIDEEESMEQPIISGIAFNRDEAKLTIRGVPDTPGVAFKILGPISASNIEVDMIVQNVAHDNTTDFTFTVHRNEYEKAQSVLENTAREIGAREVIGDTKIAKVSIVGVGMRSHAGVASCMFEALAKESINIQMISTSEIKVSVVLEEKYLELAVRALHTAFDLDAPARQGE.

The 84-residue stretch at 265-348 (LTIRGVPDTP…KIAKVSIVGV (84 aa)) folds into the ACT domain.

Belongs to the aspartokinase family.

The protein resides in the cytoplasm. It catalyses the reaction L-aspartate + ATP = 4-phospho-L-aspartate + ADP. Its pathway is amino-acid biosynthesis; L-lysine biosynthesis via DAP pathway; (S)-tetrahydrodipicolinate from L-aspartate: step 1/4. The protein operates within amino-acid biosynthesis; L-methionine biosynthesis via de novo pathway; L-homoserine from L-aspartate: step 1/3. It functions in the pathway amino-acid biosynthesis; L-threonine biosynthesis; L-threonine from L-aspartate: step 1/5. Allosterically feedback inhibited by L-lysine and L-threonine individually and also subject to a concerted feedback inhibition by these amino acids. Involved in the biosynthesis of L-aspartate-beta-semialdehyde which is a central intermediate in the biosynthesis of different amino acids (L-lysine, L-methionine, L-threonine). Catalyzes the phosphorylation of the beta-carboxyl group of L-aspartate to yield 4-phospho-L-aspartate. This is Aspartate kinase from Pseudomonas putida (strain ATCC 47054 / DSM 6125 / CFBP 8728 / NCIMB 11950 / KT2440).